The sequence spans 876 residues: MAMLKSLSSILFTSFALLFFLVHAQDQSGFISIDCGIPDDSSYNDETTGIKYVSDSAFVDSGTTKRIAAQFQSSGFDRHLLNVRSFPQSKRSCYDVPTPRGKGFKYLIRTRFMYGNYDDLGRVPEFDLYLGVNFWDSVKLDDATTILNKEIITIPLLDNVQVCVVDKNAGTPFLSVLEIRLLLNTTYETPYDALTLLRRLDYSKTGKLPSRYKDDIYDRIWTPRIVSSEYKILNTSLTVDQFLNNGYQPASTVMSTAETARNESLYLTLSFRPPDPNAKFYVYMHFAEIEVLKSNQTREFSIWLNEDVISPSFKLRYLLTDTFVTPDPVSGITINFSLLQPPGEFVLPPIINALEVYQVNEFLQIPTHPQDVDAMRKIKATYRVKKNWQGDPCVPVDYSWEGIDCIQSDNTTNPRVVSLNISFSELRGQIDPAFSNLTSIRKLDLSGNTLTGEIPAFLANLPNLTELNVEGNKLTGIVPQRLHERSKNGSLSLRFGRNPDLCLSDSCSNTKKKNKNGYIIPLVVVGIIVVLLTALALFRRFKKKQQRGTLGERNGPLKTAKRYFKYSEVVNITNNFERVIGKGGFGKVYHGVINGEQVAVKVLSEESAQGYKEFRAEVDLLMRVHHTNLTSLVGYCNEINHMVLIYEYMANENLGDYLAGKRSFILSWEERLKISLDAAQGLEYLHNGCKPPIVHRDVKPTNILLNEKLQAKMADFGLSRSFSVEGSGQISTVVAGSIGYLDPEYYSTRQMNEKSDVYSLGVVLLEVITGQPAIASSKTEKVHISDHVRSILANGDIRGIVDQRLRERYDVGSAWKMSEIALACTEHTSAQRPTMSQVVMELKQIVYGIVTDQENYDDSTKMLTVNLDTEMVPRAR.

An N-terminal signal peptide occupies residues 1 to 24 (MAMLKSLSSILFTSFALLFFLVHA). The Extracellular segment spans residues 25-517 (QDQSGFISID…SNTKKKNKNG (493 aa)). 3 LRR repeats span residues 415–438 (RVVSLNISFSELRGQIDPAFSNLT), 439–462 (SIRKLDLSGNTLTGEIPAFLANLP), and 463–483 (NLTELNVEGNKLTGIVPQRLH). A helical transmembrane segment spans residues 518 to 538 (YIIPLVVVGIIVVLLTALALF). The Cytoplasmic portion of the chain corresponds to 539-876 (RRFKKKQQRG…LDTEMVPRAR (338 aa)). Positions 574–847 (NNFERVIGKG…VVMELKQIVY (274 aa)) constitute a Protein kinase domain. ATP-binding positions include 580 to 588 (IGKGGFGKV) and lysine 601. Residue tyrosine 646 is modified to Phosphotyrosine. Residue aspartate 697 is the Proton acceptor of the active site. Serine 731 carries the phosphoserine modification. Threonine 732 carries the phosphothreonine modification. Tyrosine 745 is modified (phosphotyrosine).

This sequence belongs to the protein kinase superfamily. Ser/Thr protein kinase family.

It localises to the membrane. Functionally, involved in innate immune response of plants. The sequence is that of Senescence-induced receptor-like serine/threonine-protein kinase (SIRK) from Arabidopsis thaliana (Mouse-ear cress).